The sequence spans 169 residues: Ribonuclease H (169 aa).

One can recognise an RNase H type-1 domain in the interval 3 to 159 (AHAALTLYTD…CDRLATDAAR (157 aa)). Mg(2+) is bound by residues aspartate 12, glutamate 63, aspartate 87, and aspartate 151.

Belongs to the RNase H family. In terms of assembly, monomer. The cofactor is Mg(2+).

The protein resides in the cytoplasm. The catalysed reaction is Endonucleolytic cleavage to 5'-phosphomonoester.. Its function is as follows. Endonuclease that specifically degrades the RNA of RNA-DNA hybrids. The chain is Ribonuclease H from Treponema pallidum subsp. pallidum (strain SS14).